A 687-amino-acid polypeptide reads, in one-letter code: Glycine--tRNA ligase beta subunit (687 aa).

This sequence belongs to the class-II aminoacyl-tRNA synthetase family. In terms of assembly, tetramer of two alpha and two beta subunits.

Its subcellular location is the cytoplasm. The catalysed reaction is tRNA(Gly) + glycine + ATP = glycyl-tRNA(Gly) + AMP + diphosphate. This Lactobacillus acidophilus (strain ATCC 700396 / NCK56 / N2 / NCFM) protein is Glycine--tRNA ligase beta subunit.